Reading from the N-terminus, the 118-residue chain is Ribonuclease P protein component (118 aa).

This sequence belongs to the RnpA family. In terms of assembly, consists of a catalytic RNA component (M1 or rnpB) and a protein subunit.

The enzyme catalyses Endonucleolytic cleavage of RNA, removing 5'-extranucleotides from tRNA precursor.. RNaseP catalyzes the removal of the 5'-leader sequence from pre-tRNA to produce the mature 5'-terminus. It can also cleave other RNA substrates such as 4.5S RNA. The protein component plays an auxiliary but essential role in vivo by binding to the 5'-leader sequence and broadening the substrate specificity of the ribozyme. This is Ribonuclease P protein component from Shewanella denitrificans (strain OS217 / ATCC BAA-1090 / DSM 15013).